The chain runs to 716 residues: Fatty acid oxidation complex subunit alpha (716 aa).

The interval methionine 1–alanine 189 is enoyl-CoA hydratase/isomerase. Aspartate 296 contacts substrate. Positions lysine 311–alanine 716 are 3-hydroxyacyl-CoA dehydrogenase. NAD(+)-binding positions include methionine 324, aspartate 343, valine 400–glutamate 402, lysine 407, and serine 429. Histidine 450 (for 3-hydroxyacyl-CoA dehydrogenase activity) is an active-site residue. Residue asparagine 453 participates in NAD(+) binding. Substrate-binding residues include asparagine 500 and tyrosine 660.

In the N-terminal section; belongs to the enoyl-CoA hydratase/isomerase family. This sequence in the C-terminal section; belongs to the 3-hydroxyacyl-CoA dehydrogenase family. In terms of assembly, heterotetramer of two alpha chains (FadB) and two beta chains (FadA).

The enzyme catalyses a (3S)-3-hydroxyacyl-CoA + NAD(+) = a 3-oxoacyl-CoA + NADH + H(+). The catalysed reaction is a (3S)-3-hydroxyacyl-CoA = a (2E)-enoyl-CoA + H2O. It catalyses the reaction a 4-saturated-(3S)-3-hydroxyacyl-CoA = a (3E)-enoyl-CoA + H2O. It carries out the reaction (3S)-3-hydroxybutanoyl-CoA = (3R)-3-hydroxybutanoyl-CoA. The enzyme catalyses a (3Z)-enoyl-CoA = a 4-saturated (2E)-enoyl-CoA. The catalysed reaction is a (3E)-enoyl-CoA = a 4-saturated (2E)-enoyl-CoA. The protein operates within lipid metabolism; fatty acid beta-oxidation. Involved in the aerobic and anaerobic degradation of long-chain fatty acids via beta-oxidation cycle. Catalyzes the formation of 3-oxoacyl-CoA from enoyl-CoA via L-3-hydroxyacyl-CoA. It can also use D-3-hydroxyacyl-CoA and cis-3-enoyl-CoA as substrate. This chain is Fatty acid oxidation complex subunit alpha, found in Shewanella baltica (strain OS155 / ATCC BAA-1091).